Reading from the N-terminus, the 610-residue chain is MWTFPVDYDVIVIGAGHAGCEAAYCAAKMGASVLLLTSNLDTIAKLSCNPAVGGIGKGHIVREIDALGGIMAEITDLSGIQFRILNQTKGPAVRAPRAQVDKQLYHIHMKRLLEQVPGLHIMQGTAEALLDNGEKVLGVSTKEGWAYLGKTVVLSSGTFMRGLIHIGTQNFSGGRLGDAASLGLSEDLKRLGFPLGRLKTGTPARLLASSIDFSVMEEQPGDHNVCFVHRNEMFVPTLPQVSCHITHTTDQTKDLITKNLHRSALYGGRIEGVGPRYCPSIEDKIVKFADKDRHHIFIEPEGLNTQEVYVNGLSTSMPFDVQYDIIRSVSGLENAIITRPAYAIEYDYVHGNVIFPSLESKLIEGLFLCGQINGTTGYEEAAAQGLIAGVNAVNKVLRRPPFVPSRQESYIGVMLDDLTTQVLDEPYRMFTSRAEHRLLLRQDNAGMRLSHYGHSLGLLSSERYAMFQEQKACIEQEKERLSKTFRKYGDTVVPLTRVLCRPEVSYQQLLTEFPADVRDLGPIVGASLEMEIKYSGYISRQQTLIRSMERSENISIPEDIDYHSISALSLEAREKLSKFTPRTIGSAARISGISVADIQVLMVSLKKDAH.

Position 14 to 19 (14 to 19 (GAGHAG)) interacts with FAD. 274-288 (GPRYCPSIEDKIVKF) is a binding site for NAD(+).

It belongs to the MnmG family. In terms of assembly, homodimer. Heterotetramer of two MnmE and two MnmG subunits. FAD is required as a cofactor.

It localises to the cytoplasm. NAD-binding protein involved in the addition of a carboxymethylaminomethyl (cmnm) group at the wobble position (U34) of certain tRNAs, forming tRNA-cmnm(5)s(2)U34. This Chlamydia trachomatis serovar L2b (strain UCH-1/proctitis) protein is tRNA uridine 5-carboxymethylaminomethyl modification enzyme MnmG.